The sequence spans 305 residues: Glycine--tRNA ligase alpha subunit (305 aa).

This sequence belongs to the class-II aminoacyl-tRNA synthetase family. In terms of assembly, tetramer of two alpha and two beta subunits.

It localises to the cytoplasm. It catalyses the reaction tRNA(Gly) + glycine + ATP = glycyl-tRNA(Gly) + AMP + diphosphate. The chain is Glycine--tRNA ligase alpha subunit from Streptococcus pneumoniae (strain P1031).